Here is a 492-residue protein sequence, read N- to C-terminus: MGAGGPRRGAGPPDGGWGWVVLGACFVVTGFAYGFPKAVSVFFRELKRDFGAGYSDTAWVSSIMLAMLYGTGPLSSILVTRFGCRPVMLAGGLLASAGMILASFASRLVELYLTAGVLTGLGLALNFQPSLIMLGLYFERRRPLANGLAAAGSPVFLSMLSPLGQLLGERFGWRGGFLLFGGLLLHCCACGAVMRPPPGPPPRRDPSPHGGPARRRRLLDVAVCTDRAFVVYVVTKFLMALGLFVPAILLVNYAKDAGVPDAEAAFLLSIVGFVDIVARPACGALAGLGRLRPHVPYLFSLALLANGLTDLISARARSYGTLVAFCIAFGLSYGMVGALQFEVLMATVGAPRFPSALGLVLLVEAVAVLIGPPSAGRLVDALKNYEIIFYLAGSEVALAGVFMAVTTYCCLRCSKNISSGRSAEGGASDPEDVEAERDSEPMPASTEEPGSLEALEVLSPRAGSPEQEPEEEAVPELDHESIGGHEARGQKA.

Over 1–14 (MGAGGPRRGAGPPD) the chain is Cytoplasmic. Residues 15–35 (GGWGWVVLGACFVVTGFAYGF) traverse the membrane as a helical segment. At 36-58 (PKAVSVFFRELKRDFGAGYSDTA) the chain is on the extracellular side. The chain crosses the membrane as a helical span at residues 59–79 (WVSSIMLAMLYGTGPLSSILV). Over 80-85 (TRFGCR) the chain is Cytoplasmic. A helical transmembrane segment spans residues 86–106 (PVMLAGGLLASAGMILASFAS). Over 107-115 (RLVELYLTA) the chain is Extracellular. The chain crosses the membrane as a helical span at residues 116–136 (GVLTGLGLALNFQPSLIMLGL). Topologically, residues 137-146 (YFERRRPLAN) are cytoplasmic. The helical transmembrane segment at 147-167 (GLAAAGSPVFLSMLSPLGQLL) threads the bilayer. The Extracellular segment spans residues 168–172 (GERFG). The helical transmembrane segment at 173–193 (WRGGFLLFGGLLLHCCACGAV) threads the bilayer. At 194–228 (MRPPPGPPPRRDPSPHGGPARRRRLLDVAVCTDRA) the chain is on the cytoplasmic side. A helical transmembrane segment spans residues 229–249 (FVVYVVTKFLMALGLFVPAIL). At 250-257 (LVNYAKDA) the chain is on the extracellular side. Residues 258–278 (GVPDAEAAFLLSIVGFVDIVA) form a helical membrane-spanning segment. The Cytoplasmic segment spans residues 279–293 (RPACGALAGLGRLRP). The chain crosses the membrane as a helical span at residues 294 to 314 (HVPYLFSLALLANGLTDLISA). The Extracellular portion of the chain corresponds to 315-318 (RARS). Residues 319–339 (YGTLVAFCIAFGLSYGMVGAL) form a helical membrane-spanning segment. The Cytoplasmic segment spans residues 340–352 (QFEVLMATVGAPR). A helical transmembrane segment spans residues 353–373 (FPSALGLVLLVEAVAVLIGPP). Topologically, residues 374–386 (SAGRLVDALKNYE) are extracellular. A helical transmembrane segment spans residues 387 to 407 (IIFYLAGSEVALAGVFMAVTT). The Cytoplasmic portion of the chain corresponds to 408–492 (YCCLRCSKNI…GGHEARGQKA (85 aa)). Residues 419 to 492 (SGRSAEGGAS…GGHEARGQKA (74 aa)) are disordered. Basolateral sorting signal regions lie at residues 426–460 (GASD…VLSP) and 461–482 (RAGS…HESI). Over residues 476–492 (ELDHESIGGHEARGQKA) the composition is skewed to basic and acidic residues.

The protein belongs to the major facilitator superfamily. Monocarboxylate porter (TC 2.A.1.13) family. As to expression, expressed exclusively in retinal pigment epithelium and choroid plexus epithelium.

The protein localises to the basolateral cell membrane. It catalyses the reaction (S)-lactate(in) + H(+)(in) = (S)-lactate(out) + H(+)(out). Probable retinal pigment epithelium (RPE)-specific proton-coupled L-lactate transporter. May facilitate transport of lactate and H(+) out of the retina and could therefore play an essential role in maintenance of metabolic and ionic homeostasis of the outer retina. The protein is Monocarboxylate transporter 3 (Slc16a8) of Mus musculus (Mouse).